Here is a 337-residue protein sequence, read N- to C-terminus: 1-aminocyclopropane-1-carboxylate deaminase (337 aa).

Lys50 is modified (N6-(pyridoxal phosphate)lysine). The active-site Nucleophile is the Ser77.

Belongs to the ACC deaminase/D-cysteine desulfhydrase family. As to quaternary structure, homotrimer. Pyridoxal 5'-phosphate is required as a cofactor.

It catalyses the reaction 1-aminocyclopropane-1-carboxylate + H2O = 2-oxobutanoate + NH4(+). Catalyzes a cyclopropane ring-opening reaction, the irreversible conversion of 1-aminocyclopropane-1-carboxylate (ACC) to ammonia and alpha-ketobutyrate. Allows growth on ACC as a nitrogen source. The protein is 1-aminocyclopropane-1-carboxylate deaminase of Allorhizobium ampelinum (strain ATCC BAA-846 / DSM 112012 / S4) (Agrobacterium vitis (strain S4)).